We begin with the raw amino-acid sequence, 526 residues long: Vitamin B6 transporter bsu1 (526 aa).

The disordered stretch occupies residues 1–53 (MASKIASLFSPSETASKDQHENVAEDLELGTASSQSDGIHETNSEYDEKKREE). Residues 38–53 (GIHETNSEYDEKKREE) show a composition bias toward basic and acidic residues. The next 12 helical transmembrane spans lie at 81–101 (WSIV…SNGF), 118–138 (VATL…MFLG), 147–167 (KPVY…CALP), 173–192 (MIIS…TNVA), 204–224 (AGVP…GAPM), 238–257 (WLYY…ILII), 314–330 (LYNF…LTAI), 349–366 (YLSG…QPIQ), 387–407 (FTSA…FAFT), 413–432 (PWMS…GHNW), 444–461 (PLLS…SFIG), and 480–501 (WAVA…TFYF).

Belongs to the major facilitator superfamily. CAR1 family.

The protein resides in the membrane. Functionally, thiamine-regulated, high affinity import carrier of pyridoxine, pyridoxal and pyridoxamine. Also imports, but does not export, amiloride and so confers sensitivity. This Schizosaccharomyces pombe (strain 972 / ATCC 24843) (Fission yeast) protein is Vitamin B6 transporter bsu1 (bsu1).